Consider the following 825-residue polypeptide: Penicillin-binding protein 1A (825 aa).

Residues 1–6 lie on the Cytoplasmic side of the membrane; the sequence is MKFIKR. The helical; Signal-anchor for type II membrane protein transmembrane segment at 7–27 threads the bilayer; it reads LLVFSLICIILGVTTIFGFYF. Residues 28 to 825 are Periplasmic-facing; it reads YVKSDLPDVA…YSTSSGEELF (798 aa). A transglycosylase region spans residues 48 to 216; that stretch reads MQVFSQDGKL…STMNPIYSVE (169 aa). Catalysis depends on Glu86, which acts as the Proton donor; for transglycosylase activity. The tract at residues 413-752 is transpeptidase; the sequence is PRTQDGAITA…GKTALPAWVE (340 aa). Ser471 acts as the Acyl-ester intermediate; for transpeptidase activity in catalysis.

The protein in the N-terminal section; belongs to the glycosyltransferase 51 family. This sequence in the C-terminal section; belongs to the transpeptidase family.

The protein resides in the cell inner membrane. It catalyses the reaction [GlcNAc-(1-&gt;4)-Mur2Ac(oyl-L-Ala-gamma-D-Glu-L-Lys-D-Ala-D-Ala)](n)-di-trans,octa-cis-undecaprenyl diphosphate + beta-D-GlcNAc-(1-&gt;4)-Mur2Ac(oyl-L-Ala-gamma-D-Glu-L-Lys-D-Ala-D-Ala)-di-trans,octa-cis-undecaprenyl diphosphate = [GlcNAc-(1-&gt;4)-Mur2Ac(oyl-L-Ala-gamma-D-Glu-L-Lys-D-Ala-D-Ala)](n+1)-di-trans,octa-cis-undecaprenyl diphosphate + di-trans,octa-cis-undecaprenyl diphosphate + H(+). It carries out the reaction Preferential cleavage: (Ac)2-L-Lys-D-Ala-|-D-Ala. Also transpeptidation of peptidyl-alanyl moieties that are N-acyl substituents of D-alanine.. Its pathway is cell wall biogenesis; peptidoglycan biosynthesis. Functionally, cell wall formation. Synthesis of cross-linked peptidoglycan from the lipid intermediates. The enzyme has a penicillin-insensitive transglycosylase N-terminal domain (formation of linear glycan strands) and a penicillin-sensitive transpeptidase C-terminal domain (cross-linking of the peptide subunits). The protein is Penicillin-binding protein 1A (mrcA) of Vibrio cholerae serotype O1 (strain ATCC 39315 / El Tor Inaba N16961).